Reading from the N-terminus, the 30-residue chain is Bacteriocin curvaticin (30 aa).

A disulfide bridge links Cys-9 with Cys-14.

The protein resides in the secreted. Its function is as follows. Has antibacterial activity against the Gram-positive bacterium L.monocytogenes. The polypeptide is Bacteriocin curvaticin (Latilactobacillus curvatus (Lactobacillus curvatus)).